The chain runs to 127 residues: Large ribosomal subunit protein bL20 (127 aa).

The protein belongs to the bacterial ribosomal protein bL20 family.

In terms of biological role, binds directly to 23S ribosomal RNA and is necessary for the in vitro assembly process of the 50S ribosomal subunit. It is not involved in the protein synthesizing functions of that subunit. This Streptomyces avermitilis (strain ATCC 31267 / DSM 46492 / JCM 5070 / NBRC 14893 / NCIMB 12804 / NRRL 8165 / MA-4680) protein is Large ribosomal subunit protein bL20.